Consider the following 142-residue polypeptide: Antirestriction protein KlcA (142 aa).

This sequence belongs to the antirestriction protein family.

Its function is as follows. Could be involved in overcoming restriction barriers during establishment after conjugative transfer. The sequence is that of Antirestriction protein KlcA (klcA) from Escherichia coli.